Reading from the N-terminus, the 987-residue chain is Collagen alpha-1(I) chain (987 aa).

Positions 1 to 987 (GPMGPSGPRG…PGPPGPPGPP (987 aa)) are disordered. Low complexity predominate over residues 20–39 (PQGFQGPPGEPGEPGASGPM). Residues 51-65 (NGDDGEAGKPGRPGE) show a composition bias toward basic and acidic residues. Ser-93 is modified (phosphoserine). 2 stretches are compositionally biased toward low complexity: residues 101 to 117 (DAGPAGPKGEPGSPGEN) and 141 to 153 (AGARGNDGATGAA). Pro residues predominate over residues 155 to 167 (PPGPTGPAGPPGF). Composition is skewed to low complexity over residues 201–251 (AGAA…APGP), 354–380 (KGITGSPGSPGPDGKTGPPGPAGQDGR), 389–408 (ARGQAGVMGFPGPKGAAGEP), 422–444 (AVGAPGKDGEAGAPGATGPAGPA), 516–543 (NGAPGNDGAKGDAGAPGAPGSQGAPGIQ), 602–614 (PNGPAGPTGARGA), 627–654 (AGFAGPPGADGQPGAKGEPGDAGAKGDA), 662–677 (PTGAPGPIGNVGAPGP), 686–696 (ATGFPGAAGRV), and 737–752 (SGEKGSPGADGPAGAP). Gly residues predominate over residues 756–765 (GPQGIGGQRG). Over residues 799 to 809 (PPGPMGPPGIA) the composition is skewed to pro residues. Residues 811–826 (PPGESGREGSPGAEGS) show a composition bias toward low complexity. Over residues 845–860 (AGPPGAPGAPGAPGPV) the composition is skewed to pro residues. Residues 896-907 (RGDKGETGEQGD) are compositionally biased toward basic and acidic residues. Residues 923-956 (PGEQGPSGASGPAGPRGPPGSAGAPGKDGINGIP) show a composition bias toward low complexity. Residues 972 to 987 (VGPPGPPGPPGPPGPP) show a composition bias toward pro residues.

It belongs to the fibrillar collagen family. In terms of assembly, trimers of one alpha 2(I) and two alpha 1(I) chains. Post-translationally, prolines at the third position of the tripeptide repeating unit (G-X-Y) are hydroxylated in some or all of the chains. Forms the fibrils of tendon, ligaments and bones. In bones, the fibrils are mineralized with calcium hydroxyapatite.

The protein resides in the secreted. Its subcellular location is the extracellular space. It is found in the extracellular matrix. Type I collagen is a member of group I collagen (fibrillar forming collagen). The chain is Collagen alpha-1(I) chain from Orycteropus afer (Aardvark).